Consider the following 196-residue polypeptide: Peptidyl-tRNA hydrolase (196 aa).

Tyr18 is a tRNA binding site. The Proton acceptor role is filled by His23. Phe69, Asn71, and Asn117 together coordinate tRNA.

It belongs to the PTH family. In terms of assembly, monomer.

Its subcellular location is the cytoplasm. It catalyses the reaction an N-acyl-L-alpha-aminoacyl-tRNA + H2O = an N-acyl-L-amino acid + a tRNA + H(+). Hydrolyzes ribosome-free peptidyl-tRNAs (with 1 or more amino acids incorporated), which drop off the ribosome during protein synthesis, or as a result of ribosome stalling. Its function is as follows. Catalyzes the release of premature peptidyl moieties from peptidyl-tRNA molecules trapped in stalled 50S ribosomal subunits, and thus maintains levels of free tRNAs and 50S ribosomes. This is Peptidyl-tRNA hydrolase from Vibrio cholerae serotype O1 (strain ATCC 39315 / El Tor Inaba N16961).